The sequence spans 568 residues: Natural resistance-associated macrophage protein 2 (568 aa).

The disordered stretch occupies residues 1-40 (MVLGPEQKMSDDSVSGDHGESASLGNINPAYSNPSLSQSP). Residues 1–69 (MVLGPEQKMS…EEYSCFSFRK (69 aa)) lie on the Cytoplasmic side of the membrane. Over residues 8–20 (KMSDDSVSGDHGE) the composition is skewed to basic and acidic residues. The span at 23–40 (SLGNINPAYSNPSLSQSP) shows a compositional bias: polar residues. Residues 70-90 (LWAFTGPGFLMSIAYLDPGNI) form a helical membrane-spanning segment. Over 91 to 96 (ESDLQS) the chain is Extracellular. A helical transmembrane segment spans residues 97 to 117 (GAVAGFKLLWILLLATLVGLL). The Cytoplasmic portion of the chain corresponds to 118–154 (LQRLAARLGVVTGLHLAEVCHRQYPKVPRVILWLMVE). A helical transmembrane segment spans residues 155-175 (LAIIGSDMQEVIGSAIAINLL). Topologically, residues 176-179 (SVGR) are extracellular. The helical transmembrane segment at 180-200 (IPLWGGVLITIADTFVFLFLD) threads the bilayer. Residues 201–208 (KYGLRKLE) lie on the Cytoplasmic side of the membrane. Residues 209 to 229 (AFFGFLITIMALTFGYEYVTV) form a helical membrane-spanning segment. Residues 230-255 (KPSQSQVLKGMFVPSCSGCRTPQIEQ) are Extracellular-facing. The chain crosses the membrane as a helical span at residues 256–276 (AVGIVGAVIMPHNMYLHSALV). Residues 277–301 (KSRQVNRNNKQEVREANKYFFIESC) are Cytoplasmic-facing. Residues 302–322 (IALFVSFIINVFVVSVFAEAF) form a helical membrane-spanning segment. Residues 323–360 (FGKTNEQVVEVCTNTSSPHAGLFPKDNSTLAVDIYKGG) lie on the Extracellular side of the membrane. N-linked (GlcNAc...) asparagine glycosylation is found at Asn336 and Asn349. Residues 361-381 (VVLGCYFGPAALYIWAVGILA) traverse the membrane as a helical segment. Residues 382–408 (AGQSSTMTGTYSGQFVMEGFLNLKWSR) are Cytoplasmic-facing. The chain crosses the membrane as a helical span at residues 409-429 (FARVVLTRSIAIIPTLLVAVF). Over 430 to 440 (QDVEHLTGMND) the chain is Extracellular. The chain crosses the membrane as a helical span at residues 441-461 (FLNVLQSLQLPFALIPILTFT). Residues 462–482 (SLRPVMSDFANGLGWRIAGGI) are Cytoplasmic-facing. Residues 483-503 (LVLIICSINMYFVVVYVRDLG) form a helical membrane-spanning segment. The Extracellular portion of the chain corresponds to 504-506 (HVA). Residues 507 to 527 (LYVVAAVVSVAYLGFVFYLGW) traverse the membrane as a helical segment. Over 528–568 (QCLIALGMSFLDCGHTCHLGLTAQPELYLLNTMDADSLVSR) the chain is Cytoplasmic. Residues 555–559 (YLLNT) form a required for early endosome targeting region. 2 positions are modified to phosphoserine: Ser564 and Ser567.

Belongs to the NRAMP family. In terms of assembly, forms a complex with NDFIP1 and NEDD4L, in cortical neurons, in response to iron and cobalt exposure; this interaction leads to SLC11A2 ubiquitination by NEDD4L and proteasome-dependent degradation. Interacts with NDFIP1, NDFIP2 and WWP2; this interaction leads to SLC11A2 ubiquitination by WWP2 and subsequent proteasome-dependent degradation. Interacts with COX2 and TOM6 at the outer mitochondrion membrane. Interacts with ARRDC1; this interaction regulates the incorporation of SLC11A2 into extracellular vesicles through an ubiquitination-dependent mechanism. Interacts with ARRDC4; controls the incorporation of SLC11A2 into extracellular vesicles through an ubiquitination-dependent mechanism. Ubiquitinated by WWP2. In terms of processing, N-glycosylated. As to expression, ubiquitously expressed. Expressed in erythroid progenitors.

The protein resides in the early endosome membrane. The protein localises to the apical cell membrane. Its subcellular location is the late endosome membrane. It is found in the lysosome membrane. It localises to the cell membrane. The protein resides in the extracellular vesicle membrane. The protein localises to the mitochondrion outer membrane. Its subcellular location is the golgi apparatus. It is found in the trans-Golgi network membrane. It localises to the recycling endosome membrane. The catalysed reaction is Fe(2+)(in) + H(+)(in) = Fe(2+)(out) + H(+)(out). The enzyme catalyses Co(2+)(out) + H(+)(out) = Co(2+)(in) + H(+)(in). It carries out the reaction Cd(2+)(out) + H(+)(out) = Cd(2+)(in) + H(+)(in). It catalyses the reaction Mn(2+)(in) + H(+)(in) = Mn(2+)(out) + H(+)(out). The catalysed reaction is Zn(2+)(out) + H(+)(out) = Zn(2+)(in) + H(+)(in). The enzyme catalyses Ni(2+)(out) + H(+)(out) = Ni(2+)(in) + H(+)(in). It carries out the reaction H(+)(in) = H(+)(out). It catalyses the reaction Fe(2+)(in) = Fe(2+)(out). Proton-coupled metal ion symporter operating with a proton to metal ion stoichiometry of 1:1. Selectively transports various divalent metal cations, in decreasing affinity: Cd(2+) &gt; Fe(2+) &gt; Co(2+), Mn(2+) &gt;&gt; Zn(2+), Ni(2+), VO(2+). Essential for maintenance of iron homeostasis by modulating intestinal absorption of dietary Fe(2+) and TF-associated endosomal Fe(2+) transport in erythroid precursors and other cells. Enables Fe(2+) and Mn(2+) ion entry into mitochondria, and is thus expected to promote mitochondrial heme synthesis, iron-sulfur cluster biogenesis and antioxidant defense. Can mediate uncoupled fluxes of either protons or metal ions. This chain is Natural resistance-associated macrophage protein 2 (SLC11A2), found in Homo sapiens (Human).